Here is a 152-residue protein sequence, read N- to C-terminus: Large ribosomal subunit protein uL13 (152 aa).

The tract at residues 133–152 (EHPHQAQKPQPLTINTIPGA) is disordered. The segment covering 139–152 (QKPQPLTINTIPGA) has biased composition (polar residues).

The protein belongs to the universal ribosomal protein uL13 family. In terms of assembly, part of the 50S ribosomal subunit.

In terms of biological role, this protein is one of the early assembly proteins of the 50S ribosomal subunit, although it is not seen to bind rRNA by itself. It is important during the early stages of 50S assembly. The protein is Large ribosomal subunit protein uL13 of Thermosynechococcus vestitus (strain NIES-2133 / IAM M-273 / BP-1).